We begin with the raw amino-acid sequence, 361 residues long: mRNA export factor ICP27 homolog (361 aa).

Over residues 1–15 the composition is skewed to low complexity; it reads MEDSGNSSGSEASRS. The interval 1 to 107 is disordered; the sequence is MEDSGNSSGS…SESARAAVSA (107 aa). Positions 16–36 are enriched in basic and acidic residues; sequence GSEERRPVRERLGSRPPERRP. The interval 45 to 54 is RGG-box; it reads RRRRGGRGGR. Residues 80–99 show a composition bias toward basic and acidic residues; that stretch reads RQEADRPDGGPDAPPDRLSE. Zn(2+) is bound by residues cysteine 253, histidine 328, cysteine 332, and cysteine 337. The CHC2-type zinc-finger motif lies at 253–337; it reads CYLRDTPVDE…HKTGCDAPTC (85 aa).

Belongs to the HHV-1 ICP27 protein family. As to quaternary structure, homodimer. Homodimerization is required for transactivation. Associates in a complex with RNA, and host export factors NXF1/TAP and ALYREF; these interactions allow nuclear export of viral transcripts. Interacts with three host shuttling SR proteins SRSF1, SRSF3 and SRSF7. Interacts with host SRPK1. Interacts with IE62; this interaction enhances IE62 transactivation.

It localises to the host cytoplasm. Its subcellular location is the host nucleus. In terms of biological role, multifunctional regulator of the expression of viral genes that mediates nuclear export of viral intronless mRNAs. This immediate early (EI) protein promotes the nuclear export of viral intronless mRNAs by interacting with mRNAs and host NXF1/TAP. In Suid herpesvirus 1 (strain Kaplan) (SuHV-1), this protein is mRNA export factor ICP27 homolog.